The following is a 232-amino-acid chain: Ribonuclease 3 (232 aa).

The RNase III domain maps to 5 to 134 (ENLLFDRFGL…FLGALLLDKG (130 aa)). Glu-47 serves as a coordination point for Mg(2+). Residue Asp-51 is part of the active site. Mg(2+) contacts are provided by Asp-120 and Glu-123. Glu-123 is an active-site residue. The region spanning 160 to 229 (DYKTKLQELL…AKNAFEKENH (70 aa)) is the DRBM domain.

Belongs to the ribonuclease III family. As to quaternary structure, homodimer. The cofactor is Mg(2+).

It localises to the cytoplasm. It carries out the reaction Endonucleolytic cleavage to 5'-phosphomonoester.. In terms of biological role, digests double-stranded RNA. Involved in the processing of primary rRNA transcript to yield the immediate precursors to the large and small rRNAs (23S and 16S). Processes some mRNAs, and tRNAs when they are encoded in the rRNA operon. Processes pre-crRNA and tracrRNA of type II CRISPR loci if present in the organism. This chain is Ribonuclease 3, found in Streptococcus gordonii (strain Challis / ATCC 35105 / BCRC 15272 / CH1 / DL1 / V288).